A 641-amino-acid chain; its full sequence is DEAD-box ATP-dependent RNA helicase 50 (641 aa).

Disordered stretches follow at residues 86–115 (SMPSPAVLSTTTRVPDRPKENGRSTSIGNF), 129–189 (RSAH…LNSV), and 197–216 (DDLDFPGSEATSGSKRWGNI). Positions 150-159 (PSDESDEDGT) are enriched in acidic residues. Residues 240–268 (RSFKEIGCSDEILGALRSFGFPRPSHIQA) carry the Q motif motif. A Helicase ATP-binding domain is found at 271–452 (YRPVLEGKSC…VETFPDCELI (182 aa)). 284–291 (DQSGSGKT) provides a ligand contact to ATP. The DEAD box signature appears at 399 to 402 (DEVD). The 155-residue stretch at 487 to 641 (NKKSALVKII…GHPLHDVPCV (155 aa)) folds into the Helicase C-terminal domain.

It belongs to the DEAD box helicase family.

It catalyses the reaction ATP + H2O = ADP + phosphate + H(+). Functionally, probably involved in resistance to biotic and abiotic stresses. Confers tolerance to oxidative stress and mediates pathogenesis-related (PR) genes expression. Exhibits RNA-dependent ATPase and ATP-dependent RNA helicase activities in vitro. In Oryza sativa subsp. japonica (Rice), this protein is DEAD-box ATP-dependent RNA helicase 50.